The primary structure comprises 223 residues: Serine/threonine/tyrosine-interacting protein (223 aa).

The Tyrosine-protein phosphatase domain occupies 28–176 (EMQEILPGLF…LQEYEAIYLA (149 aa)). Positions 76–78 (FQQ) match the Interaction with FBXW7 motif. 3 positions are modified to phosphoserine: Ser-184, Ser-193, and Ser-201. The tract at residues 197 to 223 (GTTGSLKRTHEEEDDFGTMQVATAQNG) is disordered.

It belongs to the protein-tyrosine phosphatase family. Non-receptor class subfamily. In terms of assembly, interacts with MAPK1; independently of MAPK1 phosphorylation status. Interacts with CARHSP1/Crhsp-24. Interacts (via FQQ motif) with FBXW7 (via F-box domain); the interaction is direct and prevents FBXW7 interaction with SKP1, a component of the SCF(FBXW7) complex.

It is found in the nucleus. Its subcellular location is the cytoplasm. It localises to the cytosol. Catalytically inactive phosphatase. Acts as a nuclear anchor for MAPK1/MAPK3 (ERK1/ERK2). Modulates cell-fate decisions and cell migration by spatiotemporal regulation of MAPK1/MAPK3 (ERK1/ERK2). By binding to the F-box of FBXW7, prevents the assembly of FBXW7 into the SCF E3 ubiquitin-protein ligase complex, and thereby inhibits degradation of its substrates. Plays a role in spermatogenesis. This is Serine/threonine/tyrosine-interacting protein (STYX) from Pongo abelii (Sumatran orangutan).